Here is a 473-residue protein sequence, read N- to C-terminus: Fumarate hydratase class II (473 aa).

Residues 105–107, 130–133, 140–142, and threonine 188 each bind substrate; these read SGT, HPND, and SSN. Residue histidine 189 is the Proton donor/acceptor of the active site. Serine 319 is a catalytic residue. Substrate-binding positions include serine 320 and 325-327; that span reads KVN.

Belongs to the class-II fumarase/aspartase family. Fumarase subfamily. As to quaternary structure, homotetramer.

The protein resides in the cytoplasm. The enzyme catalyses (S)-malate = fumarate + H2O. It participates in carbohydrate metabolism; tricarboxylic acid cycle; (S)-malate from fumarate: step 1/1. Its function is as follows. Involved in the TCA cycle. Catalyzes the stereospecific interconversion of fumarate to L-malate. The sequence is that of Fumarate hydratase class II from Xylella fastidiosa (strain 9a5c).